A 39-amino-acid chain; its full sequence is Colipase (39 aa).

2 disulfides stabilise this stretch: cysteine 16–cysteine 27 and cysteine 22–cysteine 38.

It belongs to the colipase family. In terms of assembly, forms a 1:1 stoichiometric complex with pancreatic lipase. Expressed by the pancreas.

It is found in the secreted. Functionally, colipase is a cofactor of pancreatic lipase. It allows the lipase to anchor itself to the lipid-water interface. Without colipase the enzyme is washed off by bile salts, which have an inhibitory effect on the lipase. The chain is Colipase from Squalus acanthias (Spiny dogfish).